A 322-amino-acid polypeptide reads, in one-letter code: Rhomboid-like protein 16, chloroplastic (322 aa).

The N-terminal 52 residues, 1 to 52 (MHAIFCRRVAVGCSSPQLTKLVTKQASQSRHSLSHLLPFDLSSRFVPPYVVS), are a transit peptide targeting the chloroplast. Helical transmembrane passes span 110–130 (WING…AVFT), 166–186 (FSHV…YFGA), 201–221 (YFAG…LSVI), 238–258 (IGKL…MLLY), 265–285 (FGLM…LNII), and 295–315 (TLTS…WARI).

The protein belongs to the peptidase S54 family.

The protein localises to the plastid. Its subcellular location is the chloroplast membrane. Functionally, rhomboid-type serine protease that catalyzes intramembrane proteolysis. May cleave the plastid translocon component Tic40. This chain is Rhomboid-like protein 16, chloroplastic, found in Arabidopsis thaliana (Mouse-ear cress).